Consider the following 154-residue polypeptide: Ribosomal RNA large subunit methyltransferase H (154 aa).

Gly-102 provides a ligand contact to S-adenosyl-L-methionine.

Belongs to the RNA methyltransferase RlmH family. In terms of assembly, homodimer.

Its subcellular location is the cytoplasm. It catalyses the reaction pseudouridine(1915) in 23S rRNA + S-adenosyl-L-methionine = N(3)-methylpseudouridine(1915) in 23S rRNA + S-adenosyl-L-homocysteine + H(+). Its function is as follows. Specifically methylates the pseudouridine at position 1915 (m3Psi1915) in 23S rRNA. The polypeptide is Ribosomal RNA large subunit methyltransferase H (Caulobacter sp. (strain K31)).